Here is a 391-residue protein sequence, read N- to C-terminus: Phosphoglycerate kinase (391 aa).

Residues 21-23 (DLN), arginine 36, 59-62 (HLGR), arginine 113, and arginine 146 contribute to the substrate site. ATP-binding positions include lysine 197, glutamate 319, and 345 to 348 (GGDT).

This sequence belongs to the phosphoglycerate kinase family. In terms of assembly, monomer.

It is found in the cytoplasm. The catalysed reaction is (2R)-3-phosphoglycerate + ATP = (2R)-3-phospho-glyceroyl phosphate + ADP. It functions in the pathway carbohydrate degradation; glycolysis; pyruvate from D-glyceraldehyde 3-phosphate: step 2/5. The chain is Phosphoglycerate kinase from Shewanella baltica (strain OS185).